A 987-amino-acid polypeptide reads, in one-letter code: MESSLYDEFGNYVGPEIESDRDSDDEVEDEDLQDKHLEENGSDGEQGPGGSNGWITTINDVEMENQIVLPEDKKYYPTAEEVYGEDVETLVMDEDEQPLEQPIIKPVRDIRFEVGVKDQATYVSTQFLIGLMSNPALVRNVALVGHLQHGKTVFMDMLVEQTHHMSTFNAKNEKHMKYTDTRVDEQERNISIKAVPMSLVLEDSRSKSYLCNIMDTPGHVNFSDEMTASLRLADGAVLIVDAAEGVMVNTERAIRHAIQDHLPIVVVINKVDRLITELKLPPRDAYYKLRHTIEVINNHISAASTTAGDLPLIDPAAGNVCFASGTAGWSFTLQSFAKMYAKLHGVAMDVDKFASRLWGDVYYHSDTRVFKRSPPVGGGERAFVQFILEPLYKIYSQVIGEHKKSVETTLAELGVTLSNSAYKLNVRPLLRLACSSVFGSASGFTDMLVKHIPSPREAAARKVDHSYTGTKDSPIYESMVECDPSGPLMVNVTKLYPKSDTSVFDVFGRVYSGRLQTGQSVRVLGEGYSPEDEEDMTIKEVTKLWIYQARYRIPVSSAPPGSWVLIEGVDASIMKTATLCNASYDEDVYIFRALQFNTLPVVKTATEPLNPSELPKMVEGLRKISKSYPLAITKVEESGEHTILGTGELYLDSIMKDLRELYSEVEVKVADPVVSFCETVVESSSMKCFAETPNKKNKITMIAEPLDRGLAEDIENGVVSIDWNRKQLGDFFRTKYDWDLLAARSIWAFGPDKQGPNILLDDTLPTEVDRNLMMAVKDSIVQGFQWGAREGPLCDEPIRNVKFKIVDARIAPEPLHRGSGQMIPTARRVAYSAFLMATPRLMEPVYYVEIQTPIDCVTAIYTVLSRRRGHVTSDVPQPGTPAYIVKAFLPVIESFGFETDLRYHTQGQAFCLSVFDHWAIVPGDPLDKAIQLRPLEPAPIQHLAREFMVKTRRRKGMSEDVSGNKFFDEAMMVELAQQTGDLHLQMI.

The interval 1–54 (MESSLYDEFGNYVGPEIESDRDSDDEVEDEDLQDKHLEENGSDGEQGPGGSNGW) is disordered. Residues 17-32 (IESDRDSDDEVEDEDL) show a composition bias toward acidic residues. Residues 136–422 (ALVRNVALVG…LGVTLSNSAY (287 aa)) enclose the tr-type G domain. The G1 stretch occupies residues 145-152 (GHLQHGKT). 145–152 (GHLQHGKT) is a GTP binding site. Residues 189–193 (NISIK) are G2. The G3 stretch occupies residues 215-218 (DTPG). Residues 215–219 (DTPGH) and 269–272 (NKVD) each bind GTP. Residues 269-272 (NKVD) form a G4 region. Residues 395–397 (YSQ) form a G5 region.

This sequence belongs to the TRAFAC class translation factor GTPase superfamily. Classic translation factor GTPase family. Interacts with BRR2A and PRP8A. In terms of tissue distribution, expressed in flower buds, open flowers and siliques. Expressed at low levels in rosettes leaves, cauline leaves and stems.

The protein resides in the nucleus speckle. Splicing factor involved in pre-mRNA splicing and component of the spliceosome. Essential for reproduction. In female gametophyte, is necessary for the egg cell and central cell fate determination and hence reproductive success. Involved in a mechanism that prevents accessory cells from adopting gametic cell fate. Is necessary to restrict LIS expression to interfere with egg-cell specification. Probable component of U5 small nuclear ribonucleoprotein (snRNP) that is required for pre-mRNA splicing. Plays an essential role in female gametogenesis and embryo development. Required for the control of polarized cell growth and cell proliferation during floral organ morphogenesis. The polypeptide is 110 kDa U5 small nuclear ribonucleoprotein component CLO (Arabidopsis thaliana (Mouse-ear cress)).